We begin with the raw amino-acid sequence, 128 residues long: Holin-like protein CidA (128 aa).

The next 4 membrane-spanning stretches (helical) occupy residues 4–24 (LLLT…INWV), 27–46 (ALHI…FTLL), 59–79 (GAAW…VGVI), and 88–108 (FGVS…VSTG).

This sequence belongs to the CidA/LrgA family. CidA subfamily.

The protein localises to the cell membrane. Its function is as follows. Increases the activity of extracellular murein hydrolases possibly by mediating their export via hole formation. Inhibited by the antiholin-like proteins LrgAB. In an unstressed cell, the LrgAB products probably inhibit the function of the CidA protein. When a cell is stressed by the addition of antibiotics or by other factors in the environment, CidA possibly oligomerizes within the bacterial cell membrane, creating lesions that disrupt the proton motive force, which in turn results in loss of cell viability. These lesions are also hypothesized to regulate the subsequent cell lysis by either allowing the murein hydrolases access to the cell wall substrate and/or regulating their activity by a possible change in the cell wall pH that results from loss of membrane potential. This is Holin-like protein CidA from Bacillus velezensis (strain DSM 23117 / BGSC 10A6 / LMG 26770 / FZB42) (Bacillus amyloliquefaciens subsp. plantarum).